The following is a 242-amino-acid chain: Biosynthetic peptidoglycan transglycosylase (242 aa).

Residues 19–39 traverse the membrane as a helical segment; the sequence is ILAALAVFWGGGIALFSVVPV.

It belongs to the glycosyltransferase 51 family.

It localises to the cell inner membrane. It carries out the reaction [GlcNAc-(1-&gt;4)-Mur2Ac(oyl-L-Ala-gamma-D-Glu-L-Lys-D-Ala-D-Ala)](n)-di-trans,octa-cis-undecaprenyl diphosphate + beta-D-GlcNAc-(1-&gt;4)-Mur2Ac(oyl-L-Ala-gamma-D-Glu-L-Lys-D-Ala-D-Ala)-di-trans,octa-cis-undecaprenyl diphosphate = [GlcNAc-(1-&gt;4)-Mur2Ac(oyl-L-Ala-gamma-D-Glu-L-Lys-D-Ala-D-Ala)](n+1)-di-trans,octa-cis-undecaprenyl diphosphate + di-trans,octa-cis-undecaprenyl diphosphate + H(+). The protein operates within cell wall biogenesis; peptidoglycan biosynthesis. Functionally, peptidoglycan polymerase that catalyzes glycan chain elongation from lipid-linked precursors. This chain is Biosynthetic peptidoglycan transglycosylase, found in Salmonella paratyphi A (strain ATCC 9150 / SARB42).